The primary structure comprises 301 residues: MLSEVLEMLAVRPDGIYVDCTFGRGGHSRAILERLGPEGRLLAIDRDLEAVAAAGATGLSADARFGIEHGRFSDVGRFVGARGWTGRVDGILMDLGVSSPQLDNARRGFSFLRAGPLDMRMDPTQKTTAAEWLAEVSERELARVLRDYGEERFAGRIARAVVEERRRRPIVTTTDLVRLIEAAIPFKDKFKHPATRTFQAIRIAVNDELGQLQQGLNEAVEVLAAGGRLVVISFHSLEDRIVKRFMRDEARGREMAGGIFETRSCPRLAVLGKPLKAGDDEIRINPRARSALLRAAEKRAA.

S-adenosyl-L-methionine contacts are provided by residues glycine 25–histidine 27, aspartate 45, phenylalanine 72, aspartate 94, and glutamine 101.

It belongs to the methyltransferase superfamily. RsmH family.

Its subcellular location is the cytoplasm. The enzyme catalyses cytidine(1402) in 16S rRNA + S-adenosyl-L-methionine = N(4)-methylcytidine(1402) in 16S rRNA + S-adenosyl-L-homocysteine + H(+). Specifically methylates the N4 position of cytidine in position 1402 (C1402) of 16S rRNA. The protein is Ribosomal RNA small subunit methyltransferase H of Methylococcus capsulatus (strain ATCC 33009 / NCIMB 11132 / Bath).